The sequence spans 117 residues: Immunoglobulin heavy variable 3-5 (117 aa).

The N-terminal stretch at M1–S18 is a signal peptide. One can recognise an Ig-like domain in the interval D19–R117. An intrachain disulfide couples C40 to C115.

This is Immunoglobulin heavy variable 3-5 from Mus musculus (Mouse).